Reading from the N-terminus, the 207-residue chain is Large ribosomal subunit protein bL20 (207 aa).

Residues 117–161 are disordered; it reads QETQPQPEEKTSLQPEKVLSTELSEEKSDDTLETKPQTTQVKAKK. A compositionally biased stretch (basic and acidic residues) spans 140–149; it reads SEEKSDDTLE.

The protein belongs to the bacterial ribosomal protein bL20 family.

Functionally, binds directly to 23S ribosomal RNA and is necessary for the in vitro assembly process of the 50S ribosomal subunit. It is not involved in the protein synthesizing functions of that subunit. The polypeptide is Large ribosomal subunit protein bL20 (Onion yellows phytoplasma (strain OY-M)).